The chain runs to 317 residues: Acetyl-coenzyme A carboxylase carboxyl transferase subunit alpha (317 aa).

One can recognise a CoA carboxyltransferase C-terminal domain in the interval 39–293 (KLEDKNRKLT…KDALGASLER (255 aa)).

The protein belongs to the AccA family. As to quaternary structure, acetyl-CoA carboxylase is a heterohexamer composed of biotin carboxyl carrier protein (AccB), biotin carboxylase (AccC) and two subunits each of ACCase subunit alpha (AccA) and ACCase subunit beta (AccD).

The protein localises to the cytoplasm. It catalyses the reaction N(6)-carboxybiotinyl-L-lysyl-[protein] + acetyl-CoA = N(6)-biotinyl-L-lysyl-[protein] + malonyl-CoA. It participates in lipid metabolism; malonyl-CoA biosynthesis; malonyl-CoA from acetyl-CoA: step 1/1. Its function is as follows. Component of the acetyl coenzyme A carboxylase (ACC) complex. First, biotin carboxylase catalyzes the carboxylation of biotin on its carrier protein (BCCP) and then the CO(2) group is transferred by the carboxyltransferase to acetyl-CoA to form malonyl-CoA. This Chromohalobacter salexigens (strain ATCC BAA-138 / DSM 3043 / CIP 106854 / NCIMB 13768 / 1H11) protein is Acetyl-coenzyme A carboxylase carboxyl transferase subunit alpha.